Here is a 433-residue protein sequence, read N- to C-terminus: ATP-dependent RNA helicase SUB2 (433 aa).

The Q motif signature appears at 49–77 (TGFRDFLLKPELLRAIGDCGFEHPSEVQQ). The Helicase ATP-binding domain occupies 80–255 (IPQSILGTDV…KKFMQNPLEI (176 aa)). 93–100 (AKSGLGKT) contacts ATP. The DEAD box motif lies at 202–205 (DECD). One can recognise a Helicase C-terminal domain in the interval 267–428 (GLQQYYIKLE…EFPEEGVDPS (162 aa)).

Belongs to the DEAD box helicase family. DECD subfamily.

Its subcellular location is the nucleus. The enzyme catalyses ATP + H2O = ADP + phosphate + H(+). In terms of biological role, ATP-binding RNA helicase involved in transcription elongation and required for the export of mRNA out of the nucleus. SUB2 also plays a role in pre-mRNA splicing and spliceosome assembly. May be involved in rDNA and telomeric silencing, and maintenance of genome integrity. The chain is ATP-dependent RNA helicase SUB2 (SUB2) from Scheffersomyces stipitis (strain ATCC 58785 / CBS 6054 / NBRC 10063 / NRRL Y-11545) (Yeast).